Reading from the N-terminus, the 515-residue chain is Centromere protein T (515 aa).

Disordered regions lie at residues 24-156 and 271-411; these read ADSR…KRKQ and LSGK…DPHK. Over residues 29–44 the composition is skewed to basic residues; sequence PMRRRSTRINAQRRRS. A compositionally biased stretch (polar residues) spans 45-58; the sequence is QTPYSNRQGSQTKT. Thr-86 is modified (phosphothreonine). Positions 94 to 375 are flexible stalk domain; sequence ILLTAPESST…DSLPAEQPPP (282 aa). Over residues 296–306 the composition is skewed to polar residues; it reads SSGTRLQSRMS. Residues Ser-313, Ser-333, Ser-345, Ser-346, Ser-357, and Ser-376 each carry the phosphoserine modification.

This sequence belongs to the CENP-T/CNN1 family. Component of the CENPA-CAD complex, composed of CENPI, CENPK, CENPL, CENPO, CENPP, CENPQ, CENPR and CENPS. The CENPA-CAD complex is probably recruited on centromeres by the CENPA-NAC complex, at least composed of CENPA, CENPC, CENPH, CENPM, CENPN, CENPT and CENPU. Identified in a centromeric complex containing histones H2A, H2B, H3 and H4, and at least CENPA, CENPB, CENPC, CENPT, CENPN, HJURP, SUPT16H, SSRP1 and RSF1. Interacts (via N-terminus) with the NDC80 complex. Heterodimer with CENPW; this dimer coassembles with CENPS-CENPX heterodimers at centromeres to form the tetrameric CENP-T-W-S-X complex. In terms of processing, dynamically phosphorylated during the cell cycle. Phosphorylated during G2 phase, metaphase and anaphase, but not during telophase or G1 phase.

The protein resides in the nucleus. It is found in the chromosome. The protein localises to the centromere. It localises to the kinetochore. Its function is as follows. Component of the CENPA-NAC (nucleosome-associated) complex, a complex that plays a central role in assembly of kinetochore proteins, mitotic progression and chromosome segregation. The CENPA-NAC complex recruits the CENPA-CAD (nucleosome distal) complex and may be involved in incorporation of newly synthesized CENPA into centromeres. Part of a nucleosome-associated complex that binds specifically to histone H3-containing nucleosomes at the centromere, as opposed to nucleosomes containing CENPA. Component of the heterotetrameric CENP-T-W-S-X complex that binds and supercoils DNA, and plays an important role in kinetochore assembly. CENPT has a fundamental role in kinetochore assembly and function. It is one of the inner kinetochore proteins, with most further proteins binding downstream. Required for normal chromosome organization and normal progress through mitosis. This Mus musculus (Mouse) protein is Centromere protein T (Cenpt).